The following is a 127-amino-acid chain: Large ribosomal subunit protein bL12 (127 aa).

The protein belongs to the bacterial ribosomal protein bL12 family. In terms of assembly, homodimer. Part of the ribosomal stalk of the 50S ribosomal subunit. Forms a multimeric L10(L12)X complex, where L10 forms an elongated spine to which 2 to 4 L12 dimers bind in a sequential fashion. Binds GTP-bound translation factors.

Forms part of the ribosomal stalk which helps the ribosome interact with GTP-bound translation factors. Is thus essential for accurate translation. The polypeptide is Large ribosomal subunit protein bL12 (Sinorhizobium fredii (strain NBRC 101917 / NGR234)).